A 293-amino-acid chain; its full sequence is Urease accessory protein UreD (293 aa).

The protein belongs to the UreD family. In terms of assembly, ureD, UreF and UreG form a complex that acts as a GTP-hydrolysis-dependent molecular chaperone, activating the urease apoprotein by helping to assemble the nickel containing metallocenter of UreC. The UreE protein probably delivers the nickel.

It is found in the cytoplasm. Functionally, required for maturation of urease via the functional incorporation of the urease nickel metallocenter. This Cupriavidus metallidurans (strain ATCC 43123 / DSM 2839 / NBRC 102507 / CH34) (Ralstonia metallidurans) protein is Urease accessory protein UreD.